The chain runs to 224 residues: Cytidylate kinase (224 aa).

Position 11-19 (11-19 (GPAAAGKST)) interacts with ATP.

The protein belongs to the cytidylate kinase family. Type 1 subfamily.

It localises to the cytoplasm. It carries out the reaction CMP + ATP = CDP + ADP. The enzyme catalyses dCMP + ATP = dCDP + ADP. In Bacillus velezensis (strain DSM 23117 / BGSC 10A6 / LMG 26770 / FZB42) (Bacillus amyloliquefaciens subsp. plantarum), this protein is Cytidylate kinase.